Consider the following 242-residue polypeptide: Small ribosomal subunit protein uS2 (242 aa).

The protein belongs to the universal ribosomal protein uS2 family.

The sequence is that of Small ribosomal subunit protein uS2 from Vibrio parahaemolyticus serotype O3:K6 (strain RIMD 2210633).